A 280-amino-acid chain; its full sequence is Manganese transport system membrane protein MntC (280 aa).

A run of 9 helical transmembrane segments spans residues 16–36 (ALIT…FIIL), 41–61 (LMGD…YMMG), 62–82 (MNFF…IGFV), 92–112 (TAIG…ISFA), 137–157 (TIII…EFLV), 168–188 (YGLN…LVTV), 193–213 (TVGI…AYLL), 221–241 (IVLA…FSYI), and 244–264 (LASG…AFLF).

The protein belongs to the ABC-3 integral membrane protein family.

Its subcellular location is the cell membrane. This protein is probably a component of a manganese permease, a binding protein-dependent, ATP-driven transport system. In Listeria monocytogenes serovar 1/2a (strain ATCC BAA-679 / EGD-e), this protein is Manganese transport system membrane protein MntC (mntC).